Reading from the N-terminus, the 349-residue chain is 1-acylglycerol-3-phosphate O-acyltransferase ABHD5 (349 aa).

A2 is modified (N-acetylalanine). Residues 77 to 184 (PLVLLHGFGG…LVEPWGFPER (108 aa)) form the AB hydrolase-1 domain. Residue S122 is modified to Phosphoserine. The short motif at 327-332 (HYVYAD) is the HXXXXD motif element.

It belongs to the peptidase S33 family. ABHD4/ABHD5 subfamily. As to quaternary structure, interacts with ADRP, PLIN and PNPLA2. Interacts with PLIN5; promotes interaction with PNPLA2.

It is found in the cytoplasm. The protein resides in the lipid droplet. It carries out the reaction a 1-acyl-sn-glycero-3-phosphate + an acyl-CoA = a 1,2-diacyl-sn-glycero-3-phosphate + CoA. It catalyses the reaction 1-(9Z-octadecenoyl)-sn-glycero-3-phosphate + (9Z)-octadecenoyl-CoA = 1,2-di-(9Z-octadecenoyl)-sn-glycero-3-phosphate + CoA. The catalysed reaction is 1-(9Z-octadecenoyl)-sn-glycero-3-phosphate + hexadecanoyl-CoA = 1-(9Z)-octadecenoyl-2-hexadecanoyl-sn-glycero-3-phosphate + CoA. The enzyme catalyses 1-(9Z-octadecenoyl)-sn-glycero-3-phosphate + octadecanoyl-CoA = 1-(9Z-octadecenoyl)-2-octadecanoyl-sn-glycero-3-phosphate + CoA. It carries out the reaction 1-(9Z-octadecenoyl)-sn-glycero-3-phosphate + (5Z,8Z,11Z,14Z)-eicosatetraenoyl-CoA = 1-(9Z)-octadecenoyl-2-(5Z,8Z,11Z,14Z)-eicosatetraenoyl-sn-glycero-3-phosphate + CoA. It catalyses the reaction eicosanoyl-CoA + 1-(9Z-octadecenoyl)-sn-glycero-3-phosphate = 1-(9Z)-octadecenoyl-2-eicosanoyl-sn-glycero-3-phosphate + CoA. The catalysed reaction is 1-hexadecanoyl-sn-glycero-3-phosphate + (9Z)-octadecenoyl-CoA = 1-hexadecanoyl-2-(9Z-octadecenoyl)-sn-glycero-3-phosphate + CoA. The enzyme catalyses 1-octadecanoyl-sn-glycero-3-phosphate + (9Z)-octadecenoyl-CoA = 1-octadecanoyl-2-(9Z-octadecenoyl)-sn-glycero-3-phosphate + CoA. It carries out the reaction 1-(5Z,8Z,11Z,14Z-eicosatetraenoyl)-sn-glycero-3-phosphate + (9Z)-octadecenoyl-CoA = 1-(5Z,8Z,11Z,14Z)-eicosatetraenoyl-2-(9Z)-octadecenoyl-sn-glycero-3-phosphate + CoA. Its activity is regulated as follows. Acyltransferase activity is inhibited by detergents such as Triton X-100 and 3-[(3-cholamidopropyl)dimethylammonio]-1-propanesulfonate (CHAPS). Acyltransferase activity is inhibited by the presence of magnesium and calcium. In terms of biological role, coenzyme A-dependent lysophosphatidic acid acyltransferase that catalyzes the transfer of an acyl group on a lysophosphatidic acid. Functions preferentially with 1-oleoyl-lysophosphatidic acid followed by 1-palmitoyl-lysophosphatidic acid, 1-stearoyl-lysophosphatidic acid and 1-arachidonoyl-lysophosphatidic acid as lipid acceptor. Functions preferentially with arachidonoyl-CoA followed by oleoyl-CoA as acyl group donors. Functions in phosphatidic acid biosynthesis. May regulate the cellular storage of triacylglycerol through activation of the phospholipase PNPLA2. Involved in keratinocyte differentiation. Regulates lipid droplet fusion. This is 1-acylglycerol-3-phosphate O-acyltransferase ABHD5 from Pongo abelii (Sumatran orangutan).